The following is a 223-amino-acid chain: Small ribosomal subunit protein uS3 (223 aa).

The region spanning 39 to 115 is the KH type-2 domain; it reads IRKYIEKNLA…RVFINIVEIK (77 aa).

The protein belongs to the universal ribosomal protein uS3 family. In terms of assembly, part of the 30S ribosomal subunit. Forms a tight complex with proteins S10 and S14.

Its function is as follows. Binds the lower part of the 30S subunit head. Binds mRNA in the 70S ribosome, positioning it for translation. The sequence is that of Small ribosomal subunit protein uS3 from Leuconostoc mesenteroides subsp. mesenteroides (strain ATCC 8293 / DSM 20343 / BCRC 11652 / CCM 1803 / JCM 6124 / NCDO 523 / NBRC 100496 / NCIMB 8023 / NCTC 12954 / NRRL B-1118 / 37Y).